The chain runs to 197 residues: Penicillin-binding protein activator LpoB (197 aa).

A signal peptide spans 1–17 (MIKRMSGIALAALLLSG). Cysteine 18 carries N-palmitoyl cysteine lipidation. The S-diacylglycerol cysteine moiety is linked to residue cysteine 18. The segment at 23–57 (PRGETPSQPPAPTTPAKPSVVPTPTPPVVTPVPQP) is disordered. Residues 29 to 57 (SQPPAPTTPAKPSVVPTPTPPVVTPVPQP) are compositionally biased toward pro residues.

It belongs to the LpoB family. As to quaternary structure, interacts with PBP1b.

It is found in the cell outer membrane. Its function is as follows. Regulator of peptidoglycan synthesis that is essential for the function of penicillin-binding protein 1B (PBP1b). The protein is Penicillin-binding protein activator LpoB of Edwardsiella piscicida.